Consider the following 231-residue polypeptide: Ribonuclease 3 (231 aa).

The 130-residue stretch at 5 to 134 folds into the RNase III domain; the sequence is QKKLKNDYGL…FLGALFIDQG (130 aa). A Mg(2+)-binding site is contributed by Glu-47. The active site involves Asp-51. Residues Asn-120 and Glu-123 each coordinate Mg(2+). Residue Glu-123 is part of the active site. Positions 160–229 constitute a DRBM domain; the sequence is DYKTELQEVL…AENAIKGQNH (70 aa).

Belongs to the ribonuclease III family. Homodimer. Requires Mg(2+) as cofactor.

The protein resides in the cytoplasm. It catalyses the reaction Endonucleolytic cleavage to 5'-phosphomonoester.. Functionally, digests double-stranded RNA. Involved in the processing of primary rRNA transcript to yield the immediate precursors to the large and small rRNAs (23S and 16S). Processes some mRNAs, and tRNAs when they are encoded in the rRNA operon. Processes pre-crRNA and tracrRNA of type II CRISPR loci if present in the organism. The protein is Ribonuclease 3 of Lactococcus lactis subsp. lactis (strain IL1403) (Streptococcus lactis).